A 342-amino-acid chain; its full sequence is Glycerol-1-phosphate dehydrogenase [NAD(P)+] (342 aa).

Residues 84–88 (GRPID) and 106–109 (TSAS) each bind NAD(+). D111 provides a ligand contact to substrate. S115 contributes to the NAD(+) binding site. D160 contributes to the substrate binding site. Residues D160 and H241 each coordinate Zn(2+). H245 serves as a coordination point for substrate. Residue H260 participates in Zn(2+) binding.

The protein belongs to the glycerol-1-phosphate dehydrogenase family. Homodimer. It depends on Zn(2+) as a cofactor.

It localises to the cytoplasm. It catalyses the reaction sn-glycerol 1-phosphate + NAD(+) = dihydroxyacetone phosphate + NADH + H(+). The catalysed reaction is sn-glycerol 1-phosphate + NADP(+) = dihydroxyacetone phosphate + NADPH + H(+). It functions in the pathway membrane lipid metabolism; glycerophospholipid metabolism. Its function is as follows. Catalyzes the NAD(P)H-dependent reduction of dihydroxyacetonephosphate (DHAP or glycerone phosphate) to glycerol 1-phosphate (G1P). The G1P thus generated is used as the glycerophosphate backbone of phospholipids in the cellular membranes of Archaea. This is Glycerol-1-phosphate dehydrogenase [NAD(P)+] from Pyrobaculum islandicum (strain DSM 4184 / JCM 9189 / GEO3).